We begin with the raw amino-acid sequence, 287 residues long: MKRIFLLIATNLAVLLVASIVMSILGVNTSTMGGLLVFAAIFGFGGAFISLAISKWMAKKTMGCEVITTPRDSTERWLVETVARQAKQAGIKMPEVAIYQSPDMNAFATGPSKDNSLVAVSTGLLYGMSQDEIEGVLAHEVSHVANGDMVTLTLIQGVVNTFVIFAARVVAGIINNFVSSNDEEGEGLGMFAYMAVVFVLDMLFGILASIIVAYFSRIREYKADEGAARLAGKGKMIAALERLRQGPESTAMPAQMSAFGINGKRSMAEMMMSHPPLEKRIAALRAS.

A run of 2 helical transmembrane segments spans residues 4 to 24 (IFLL…VMSI) and 33 to 53 (GGLL…SLAI). Histidine 139 serves as a coordination point for Zn(2+). The active site involves glutamate 140. Position 143 (histidine 143) interacts with Zn(2+). Transmembrane regions (helical) follow at residues 154 to 174 (LIQG…AGII) and 195 to 215 (AVVF…VAYF). Residue glutamate 220 participates in Zn(2+) binding.

The protein belongs to the peptidase M48B family. Zn(2+) is required as a cofactor.

The protein resides in the cell inner membrane. The polypeptide is Protease HtpX (Shewanella baltica (strain OS223)).